We begin with the raw amino-acid sequence, 538 residues long: ESX-3 secretion system ATPase EccB3 (538 aa).

Residues 1–16 are compositionally biased toward basic and acidic residues; the sequence is MTNQQHDHDFDHDRRS. The disordered stretch occupies residues 1-25; it reads MTNQQHDHDFDHDRRSFASRTPVNN. Residues 75–95 form a helical membrane-spanning segment; it reads VLMGVLIVITGLIGSFVFSLI.

This sequence belongs to the EccB family. As to quaternary structure, part of the ESX-3 / type VII secretion system (T7SS), which is composed of cytosolic and membrane components. The ESX-3 membrane complex is composed of EccB3, EccC3, EccD3 and EccE3.

It localises to the cell inner membrane. Its function is as follows. An ATPase. Part of the ESX-3 specialized secretion system, which is important for iron and zinc uptake or homeostasis. This chain is ESX-3 secretion system ATPase EccB3, found in Mycobacterium tuberculosis (strain CDC 1551 / Oshkosh).